Here is a 344-residue protein sequence, read N- to C-terminus: Eukaryotic translation initiation factor 2 subunit alpha (344 aa).

Residues Asp-21–Arg-92 form the S1 motif domain. Residue Ser-56 is modified to Phosphoserine; by GCN2. The disordered stretch occupies residues Leu-309–Glu-344. The segment covering Glu-314–Ile-336 has biased composition (acidic residues). Ser-317 and Ser-322 each carry phosphoserine; by CK2.

Belongs to the eIF-2-alpha family. In terms of assembly, eukaryotic translation initiation factor 2 eIF2 is a heterotrimeric complex composed of an alpha, a beta and a gamma subunit. Phosphorylated at Ser-56 by GCN2. Phosphorylated at Ser-317 and Ser-322 by CK2.

It is found in the cytoplasm. It localises to the cytosol. Functionally, functions in the early steps of protein synthesis by forming a ternary complex with GTP and initiator tRNA. This complex binds to a 40S ribosomal subunit, followed by mRNA binding to form a 43S pre-initiation complex. Junction of the 60S ribosomal subunit to form the 80S initiation complex is preceded by hydrolysis of the GTP bound to eIF-2 and release of an eIF-2-GDP binary complex. In order for eIF-2 to recycle and catalyze another round of initiation, the GDP bound to eIF-2 must exchange with GTP by way of a reaction catalyzed by eIF2B. This is Eukaryotic translation initiation factor 2 subunit alpha from Arabidopsis thaliana (Mouse-ear cress).